The following is a 205-amino-acid chain: Transcriptional regulator GfcR (205 aa).

This sequence belongs to the purine/pyrimidine phosphoribosyltransferase family. GfcR subfamily.

The sequence is that of Transcriptional regulator GfcR from Methanococcus maripaludis (strain DSM 14266 / JCM 13030 / NBRC 101832 / S2 / LL).